Consider the following 240-residue polypeptide: Phosducin-like protein 3 (240 aa).

Met1 carries the post-translational modification N-acetylmethionine. Residues 27–181 (KELEEEEAEK…EGDIKAQFIG (155 aa)) enclose the Phosducin domain. Phosphoserine is present on residues Ser44, Ser65, Ser235, and Ser237. The segment at 92–240 (FGEVLEISGK…MRRDSDSEDD (149 aa)) is thioredoxin fold.

Belongs to the phosducin family. In terms of assembly, interacts (via thioredoxin fold region) with KDR/VEGFR2 (via juxtamembrane domain). Forms ternary complexes with the chaperonin CCT complex and actin substrate, leading to inhibition of actin folding. Interacts with XIAP (via BIR 3 and RING domain). Interacts with HSP90AA1 and HSP90AB1. In terms of processing, N-terminal methionine acetylation destabilizes the protein. Expressed in blood vessels (at protein level).

It localises to the cytoplasm. The protein resides in the perinuclear region. It is found in the endoplasmic reticulum. In terms of biological role, acts as a chaperone for the angiogenic VEGF receptor KDR/VEGFR2, increasing its abundance by inhibiting its ubiquitination and degradation. Inhibits the folding activity of the chaperonin-containing T-complex (CCT) which leads to inhibition of cytoskeletal actin folding. Acts as a chaperone during heat shock alongside HSP90 and HSP40/70 chaperone complexes. Modulates the activation of caspases during apoptosis. The chain is Phosducin-like protein 3 (Pdcl3) from Mus musculus (Mouse).